Reading from the N-terminus, the 512-residue chain is Tyrosine-protein kinase Lyn (512 aa).

The tract at residues 1-50 (MGCIKSKRKDNLNDDGVDMKTQPVRNTDRTIYVRDPTSNKQQRPVPESQL) is disordered. The N-myristoyl glycine moiety is linked to residue Gly2. The S-palmitoyl cysteine moiety is linked to residue Cys3. Residues 63–123 (EQGDIVVALY…PSNYVAKVNT (61 aa)) form the SH3 domain. Residues 129 to 226 (WFFKDITRKD…GLCRRLEKAC (98 aa)) form the SH2 domain. The residue at position 193 (Tyr193) is a Phosphotyrosine. At Ser228 the chain carries Phosphoserine. Positions 247–501 (IKLVKKLGAG…YLQSVLDDFY (255 aa)) constitute a Protein kinase domain. ATP is bound by residues 253–261 (LGAGQFGEV) and Lys275. A phosphotyrosine mark is found at Tyr306 and Tyr316. Asp367 serves as the catalytic Proton acceptor. Tyr397 bears the Phosphotyrosine; by autocatalysis mark. Phosphotyrosine occurs at positions 460 and 473. Phosphotyrosine; by autocatalysis, CSK and MATK is present on Tyr508.

It belongs to the protein kinase superfamily. Tyr protein kinase family. SRC subfamily. In terms of assembly, interacts with TEC. Interacts (via SH2 domain) with FLT3 (tyrosine phosphorylated). Interacts with LIME1 and with CD79A upon activation of the B-cell antigen receptor. Interacts with the B-cell receptor complex. Interacts with phosphorylated THEMIS2. Interacts with EPOR. Interacts with MS4A2/FCER1B. Interaction (via the SH2 and SH3 domains) with MUC1 is stimulated by IL7 and the subsequent phosphorylation increases the binding between MUC1 and CTNNB1/beta-catenin. Interacts with ADAM15. Interacts with NDFIP2 and more weakly with NDFIP1. Interacts with FASLG. Interacts with KIT. Interacts with HCLS1. Interacts with FCGR2B. Interacts with FCGR1A; the interaction may be indirect. Interacts with CD19, CD22, CD79A and CD79B. Interacts (via SH3 domain) with CBLC, PPP1R15A and PDE4A. Interacts with TGFB1I1. Interacts (via SH3 domain) with PIK3R1, the regulatory subunit of phosphatidylinositol 3-kinase; this interaction enhances phosphatidylinositol 3-kinase activity. Interacts with CSF2RB, the common subunit of the IL3, IL5 and CSF2 receptors. Interacts with PAG1; identified in a complex with PAG1 and STAT3. Interacts with ABL1. Interacts with PTPN6/SHP-1. Interacts (via SH3 domain) with SCIMP (via proline-rich region). This interaction facilitates the phosphorylation of SCIMP 'Tyr-96', which enhances binding of SCIMP to TLR4, and consequently the phosphorylation of TLR4 in response to stimulation by lipopolysaccharide in macrophages. Interacts with LPXN (via LD motif 3) and the interaction is induced upon B-cell antigen receptor (BCR) activation. Interacts (via SH3-domain) with ANKRD54 (via ankyrin repeat region) in an activation-independent status of LYN. Forms a multiprotein complex with ANKRD54 and HCLS1. Interacts (via SH2 and SH3 domains) with UNC119; leading to LYN activation. Interacts with CD36. Interacts with LYN. Interacts with SKAP1 and FYB1; this interaction promotes the phosphorylation of CLNK. Interacts with BCAR1/CAS and NEDD9/HEF1. Ubiquitinated. Ubiquitination is SH3-dependent. In terms of processing, autophosphorylated. Phosphorylated on tyrosine residues in response to KIT signaling. Phosphorylation at Tyr-397 is required for optimal activity. Phosphorylation at Tyr-508 inhibits kinase activity. Phosphorylated at Tyr-508 by CSK. Dephosphorylated by PTPRC/CD45. Becomes rapidly phosphorylated upon activation of the B-cell receptor and the immunoglobulin receptor FCGR1A. Phosphorylated in response to integrin ITGB1 in B-cells. Detected in spleen (at protein level). Expressed predominantly in B-lymphoid and myeloid cells.

Its subcellular location is the cell membrane. It localises to the nucleus. The protein resides in the cytoplasm. It is found in the perinuclear region. The protein localises to the golgi apparatus. Its subcellular location is the membrane. The enzyme catalyses L-tyrosyl-[protein] + ATP = O-phospho-L-tyrosyl-[protein] + ADP + H(+). With respect to regulation, subject to autoinhibition, mediated by intramolecular interactions between the SH2 domain and the C-terminal phosphotyrosine. Phosphorylation at Tyr-397 is required for optimal activity. Phosphorylated by CSK at Tyr-508; phosphorylation at Tyr-508 inhibits kinase activity. Kinase activity is modulated by dephosphorylation by PTPRC/CD45. Functionally, non-receptor tyrosine-protein kinase that transmits signals from cell surface receptors and plays an important role in the regulation of innate and adaptive immune responses, hematopoiesis, responses to growth factors and cytokines, integrin signaling, but also responses to DNA damage and genotoxic agents. Functions primarily as negative regulator, but can also function as activator, depending on the context. Required for the initiation of the B-cell response, but also for its down-regulation and termination. Plays an important role in the regulation of B-cell differentiation, proliferation, survival and apoptosis, and is important for immune self-tolerance. Acts downstream of several immune receptors, including the B-cell receptor, CD79A, CD79B, CD5, CD19, CD22, FCER1, FCGR2, FCGR1A, TLR2 and TLR4. Plays a role in the inflammatory response to bacterial lipopolysaccharide. Mediates the responses to cytokines and growth factors in hematopoietic progenitors, platelets, erythrocytes, and in mature myeloid cells, such as dendritic cells, neutrophils and eosinophils. Acts downstream of EPOR, KIT, MPL, the chemokine receptor CXCR4, as well as the receptors for IL3, IL5 and CSF2. Plays an important role in integrin signaling. Regulates cell proliferation, survival, differentiation, migration, adhesion, degranulation, and cytokine release. Involved in the regulation of endothelial activation, neutrophil adhesion and transendothelial migration. Down-regulates signaling pathways by phosphorylation of immunoreceptor tyrosine-based inhibitory motifs (ITIM), that then serve as binding sites for phosphatases, such as PTPN6/SHP-1, PTPN11/SHP-2 and INPP5D/SHIP-1, that modulate signaling by dephosphorylation of kinases and their substrates. Phosphorylates LIME1 in response to CD22 activation. Phosphorylates BTK, CBL, CD5, CD19, CD72, CD79A, CD79B, CSF2RB, DOK1, HCLS1, LILRB3/PIR-B, MS4A2/FCER1B, SYK and TEC. Promotes phosphorylation of SIRPA, PTPN6/SHP-1, PTPN11/SHP-2 and INPP5D/SHIP-1. Required for rapid phosphorylation of FER in response to FCER1 activation. Mediates KIT phosphorylation. Acts as an effector of EPOR (erythropoietin receptor) in controlling KIT expression and may play a role in erythroid differentiation during the switch between proliferation and maturation. Depending on the context, activates or inhibits several signaling cascades. Regulates phosphatidylinositol 3-kinase activity and AKT1 activation. Regulates activation of the MAP kinase signaling cascade, including activation of MAP2K1/MEK1, MAPK1/ERK2, MAPK3/ERK1, MAPK8/JNK1 and MAPK9/JNK2. Mediates activation of STAT5A and/or STAT5B. Phosphorylates LPXN on 'Tyr-72'. Kinase activity facilitates TLR4-TLR6 heterodimerization and signal initiation. Phosphorylates SCIMP on 'Tyr-96'; this enhances binding of SCIMP to TLR4, promoting the phosphorylation of TLR4, and a selective cytokine response to lipopolysaccharide in macrophages. Phosphorylates CLNK. Phosphorylates BCAR1/CAS and NEDD9/HEF1. In Rattus norvegicus (Rat), this protein is Tyrosine-protein kinase Lyn (Lyn).